A 388-amino-acid polypeptide reads, in one-letter code: tRNA (guanine(26)-N(2))-dimethyltransferase (388 aa).

A Trm1 methyltransferase domain is found at 4 to 383; sequence RTIVEGTTKI…APIAEIKKII (380 aa). Positions 41, 78, 94, and 123 each coordinate S-adenosyl-L-methionine. Zn(2+) contacts are provided by C251, C254, C271, and C274.

Belongs to the class I-like SAM-binding methyltransferase superfamily. Trm1 family.

The catalysed reaction is guanosine(26) in tRNA + 2 S-adenosyl-L-methionine = N(2)-dimethylguanosine(26) in tRNA + 2 S-adenosyl-L-homocysteine + 2 H(+). Functionally, dimethylates a single guanine residue at position 26 of a number of tRNAs using S-adenosyl-L-methionine as donor of the methyl groups. The polypeptide is tRNA (guanine(26)-N(2))-dimethyltransferase (Methanosarcina acetivorans (strain ATCC 35395 / DSM 2834 / JCM 12185 / C2A)).